Reading from the N-terminus, the 122-residue chain is RxLR effector protein Avh52 (122 aa).

Positions 1-21 (MRLTSILVLVIAATFHTTGTA) are cleaved as a signal peptide. Positions 50-68 (RLLRRVEKDKVDYEQDEQR) match the RxLR-dEER motif. Residues 69–86 (SFGALKDAVKKLNPVTAV) are TAP1-binding. Residues 87–98 (KKFFKQRAKRKK) form a nuclear localization signal (NLS) region.

Belongs to the RxLR effector family. As to quaternary structure, interacts with host acetyl transferase TAP1.

It is found in the secreted. Its subcellular location is the host nucleus. Its function is as follows. Effector that suppresses plant defense responses during the early stages of pathogen infection. Suppresses cell death induced by effectors and PAMPs in plant hosts. Interacts with host acetyltransferase TAP1 and causes TAP1 relocation into the nucleus where it acetylates histones H2A and H3 during early infection, thereby promoting susceptibility of host plant to P.sojae. The chain is RxLR effector protein Avh52 from Phytophthora sojae (strain P6497) (Soybean stem and root rot agent).